Here is a 206-residue protein sequence, read N- to C-terminus: Guanylate kinase (206 aa).

Positions 7-185 constitute a Guanylate kinase-like domain; it reads GLLIVISGPS…AVEKIRAIII (179 aa). ATP is bound at residue 14 to 21; the sequence is GPSGAGKG.

The protein belongs to the guanylate kinase family.

It localises to the cytoplasm. It catalyses the reaction GMP + ATP = GDP + ADP. Its function is as follows. Essential for recycling GMP and indirectly, cGMP. This is Guanylate kinase from Caldanaerobacter subterraneus subsp. tengcongensis (strain DSM 15242 / JCM 11007 / NBRC 100824 / MB4) (Thermoanaerobacter tengcongensis).